The primary structure comprises 155 residues: Small ribosomal subunit protein uS7c (155 aa).

The protein belongs to the universal ribosomal protein uS7 family. As to quaternary structure, part of the 30S ribosomal subunit.

The protein resides in the plastid. Its subcellular location is the chloroplast. Functionally, one of the primary rRNA binding proteins, it binds directly to 16S rRNA where it nucleates assembly of the head domain of the 30S subunit. This is Small ribosomal subunit protein uS7c (rps7) from Ginkgo biloba (Ginkgo).